A 631-amino-acid chain; its full sequence is Golgin subfamily A member 8A (631 aa).

Residues 1–20 (MLPVDGEERKSEGSDTEGDR) are compositionally biased toward basic and acidic residues. Disordered stretches follow at residues 1–103 (MLPV…QEQA), 127–154 (KKQVEHQLEEEKKANNEKQKAERELEGQ), 426–447 (TSAEKEPEAAVPASGTGGESSG), and 488–520 (PGDSAKDASPGGGHHQAGPGQGGEEGEAAGAAG). Over residues 78 to 92 (SLYLSPKSSSASSSL) the composition is skewed to low complexity. Residues 93–103 (HARQSPCQEQA) show a composition bias toward polar residues. Residues 110–468 (SIKISRLNDT…REHVEKLELG (359 aa)) are a coiled coil. Residues 128 to 152 (KQVEHQLEEEKKANNEKQKAERELE) show a composition bias toward basic and acidic residues. Gly residues predominate over residues 497–510 (PGGGHHQAGPGQGG). Residues 519–631 (AGDGVAACGS…CWAWLPRRRR (113 aa)) form a golgi-targeting domain region.

The protein belongs to the GOLGA8 family.

It localises to the golgi apparatus. Its subcellular location is the golgi stack membrane. May be involved in maintaining Golgi structure. The polypeptide is Golgin subfamily A member 8A (GOLGA8A) (Homo sapiens (Human)).